The chain runs to 386 residues: MTVKVLVVDDSAFFRRRVTEILEDNTNIKVIGSANNGEEAVEQSRTLKPDVITMDIEMPVMNGIDAVKAIMSSNPCPILMFSSLTHEGATATLNALEAGAADFLPKKFEDIARNRDEAVKTLQDRVIAIARQPVSRTSARASTPPPVAKQPERSSEPTTALDRIRQRNNELQSQRESDARTATSAGALTINRAYQLLAIGTSTGGPVALQKILTQLPGNFPYPIVMVQHMPAAFTKAFSQRLDGLCQVHVKEAEDGDVLKAGTAYLAPGGKQMMVEGRPGSARLRIKDDTSGRITYKPSVDLTFASLSKTYMGKVLGVILTGMGADGRDGSRMLKDQGATIWAQDQASCVVYGMPQAVAQAGISTRSISLEGMAKAIMKEVGYSGL.

Residues 4–121 enclose the Response regulatory domain; it reads KVLVVDDSAF…ARNRDEAVKT (118 aa). The residue at position 55 (aspartate 55) is a 4-aspartylphosphate. The segment at 133 to 161 is disordered; that stretch reads PVSRTSARASTPPPVAKQPERSSEPTTAL. Residues 190 to 384 enclose the CheB-type methylesterase domain; sequence INRAYQLLAI…KAIMKEVGYS (195 aa). Catalysis depends on residues serine 202, histidine 229, and aspartate 326.

Belongs to the CheB family. In terms of processing, phosphorylated by CheA. Phosphorylation of the N-terminal regulatory domain activates the methylesterase activity.

The protein localises to the cytoplasm. It carries out the reaction [protein]-L-glutamate 5-O-methyl ester + H2O = L-glutamyl-[protein] + methanol + H(+). The catalysed reaction is L-glutaminyl-[protein] + H2O = L-glutamyl-[protein] + NH4(+). Functionally, involved in chemotaxis. Part of a chemotaxis signal transduction system that modulates chemotaxis in response to various stimuli. Catalyzes the demethylation of specific methylglutamate residues introduced into the chemoreceptors (methyl-accepting chemotaxis proteins or MCP) by CheR. Also mediates the irreversible deamidation of specific glutamine residues to glutamic acid. The protein is Protein-glutamate methylesterase/protein-glutamine glutaminase of Idiomarina loihiensis (strain ATCC BAA-735 / DSM 15497 / L2-TR).